The primary structure comprises 1083 residues: MKRTIKNFLTGSITYFDTEKYFSNPNLYYYRIYPVEDNKTIKIRVSTTDNTIIHPEINKTKIILKIKILEDSIVRSLRKEIITNRNARKQLHSKGNLRYVPTTSRNPSNTDTYSSSIDISSSSSSINTSDDSSGKTSSNDLSDMSSKSLNESLTDYIESNPFELDKPSTTTNRISKTKYISKIIGVYKLNTKSFKTILNNLPNKHILDLSEFIQGDFLLSIYNNYENIFYLRNDFMLMNKLHTTIPLEINRNRLFFSFLFLLFYLHQNNYNTVNVELFNIGLSHNNSDKLISLKTIKGRRTVPLTINYEHGGYIEPILIDYVAMSNGQQNVFKLSNFMPFDNSVLYKNITDDIKYPYLPIDLIKKTFGTISSYVMENLCWIAKSTTNTEISIIDRQILYLLDMYDLFNGVPLSNNNITNVANYNMVQTNIIMNCHGDVSKCFQYNTNNLINDLDNLEVTILPPDNTSPTKLRMIPDDLKKLYQIYNNQYGIKIFGSIKSTNDIDIKMETFTRRVCLSRYWYSQLKNSYLVSRTILEDNYNFFEAFLDEQIDKLMKLIQQELYTIDGKFQVEIFVYHFLSLSTDYILPSINNFDYSNYLGESYVTMIYDFVTSIISNGNIRNKLFVFLALSKIIHLSMIRKLFMVFYIKENSNNNSELLQHGINNNKITMDKFDENIPFEFDANIYCQQRGLNINLIEYRYTILKELVPLKQNDIGTNNLGYYLFRLLDNNIKHTYVLYMYEDFKYCILGRIRFDKNKVPFKDYTYIPKTQDILYPKMDEYEFYKKNNEYVAFLDRGMDTQRMSVLDHDNIFIESFRQGEPVLSGASGHTADILLCAGYLEPSDSDRFVNKMKLMTILCVSVMFPRKDHSIFEMYRALQLFNKPMKTNEFTCPVENINTGSCFKWLLRDIVYNVGDNQLIGNQIYNTLTNRLNRSFEYYLSPKYYRIIEKIIEQFYKSTFQNININKFANDIRNIISDQQFNNINDELFIIMTIIRREGNKIWMNDAEYAYNIENKHISMRNFIDGNYSLPDFFTDDDIFLYEDNVITCTRSIYDFVKPVNSFDNTCLILQKIFWAASKPQCIW.

Residues 93–145 (SKGNLRYVPTTSRNPSNTDTYSSSIDISSSSSSINTSDDSSGKTSSNDLSDMS) are disordered. The segment covering 108 to 145 (SNTDTYSSSIDISSSSSSINTSDDSSGKTSSNDLSDMS) has biased composition (low complexity).

It localises to the virion. This is an uncharacterized protein from Acanthamoeba polyphaga (Amoeba).